The following is a 296-amino-acid chain: MSQMKSRMETAAKMKDEDKLYRRDGILYSTVLSPPETLDKLKDLQAREDDLILVAYPKCGFNWMVAVLRKIINASTGKDEKPPERPPLVEFLPPTVQEEMAQMPPPRLLGTHLHPDNMPATFFTKKPKILVVFRNPKDTVVSYYHFMNKNPVLPNAESWDKFFSDFMTGDVSWGSYFDHALAWEKRIDDPNVMIVMYEDLKQNLPEGVKKISEFFSLPLTDEQVSSIAGQSTFSAMVENSQKSHGNFGSIFFRKGEVGDWKNHFSEAQSKQMDELYHSKLAGTKLAARMNYDLYCQ.

The Proton acceptor role is filled by histidine 112. 3'-phosphoadenylyl sulfate contacts are provided by residues arginine 134, serine 142, tyrosine 197, and 253–255 (RKG).

Belongs to the sulfotransferase 1 family.

It is found in the cytoplasm. It localises to the cytosol. The catalysed reaction is thyroxine + 3'-phosphoadenylyl sulfate = thyroxine sulfate + adenosine 3',5'-bisphosphate + H(+). With respect to regulation, strongly inhibited by the divalent metal cations Fe(2+), Hg(2+), Co(2+), Zn(2+), Cu(2+) and Cd(2+). In terms of biological role, sulfotransferase that utilizes 3'-phospho-5'-adenylyl sulfate (PAPS) as sulfonate donor to catalyze the sulfate conjugation of a variety of xenobiotic and endogenous compounds, including dopamine, T3 (triiodo-L-thyronine), T4 (thyroxine), flavonoids, isoflavonoids, and other phenolic compounds. This is Sulfotransferase 6B1 from Danio rerio (Zebrafish).